A 395-amino-acid chain; its full sequence is Acetate kinase (395 aa).

Position 8 (Asn-8) interacts with Mg(2+). Lys-15 contacts ATP. Arg-94 serves as a coordination point for substrate. Residue Asp-151 is the Proton donor/acceptor of the active site. Residues 210–214 (HLGNG), 284–286 (DMR), and 329–333 (GIGEN) contribute to the ATP site. Glu-382 lines the Mg(2+) pocket.

This sequence belongs to the acetokinase family. As to quaternary structure, homodimer. Mg(2+) serves as cofactor. The cofactor is Mn(2+).

It is found in the cytoplasm. It carries out the reaction acetate + ATP = acetyl phosphate + ADP. It participates in metabolic intermediate biosynthesis; acetyl-CoA biosynthesis; acetyl-CoA from acetate: step 1/2. Catalyzes the formation of acetyl phosphate from acetate and ATP. Can also catalyze the reverse reaction. The chain is Acetate kinase from Protochlamydia amoebophila (strain UWE25).